A 471-amino-acid chain; its full sequence is UDP-N-acetylmuramate--L-alanine ligase (471 aa).

114–120 (GTHGKTT) is a binding site for ATP.

It belongs to the MurCDEF family.

The protein resides in the cytoplasm. It catalyses the reaction UDP-N-acetyl-alpha-D-muramate + L-alanine + ATP = UDP-N-acetyl-alpha-D-muramoyl-L-alanine + ADP + phosphate + H(+). It participates in cell wall biogenesis; peptidoglycan biosynthesis. In terms of biological role, cell wall formation. In Rhizobium johnstonii (strain DSM 114642 / LMG 32736 / 3841) (Rhizobium leguminosarum bv. viciae), this protein is UDP-N-acetylmuramate--L-alanine ligase.